The sequence spans 125 residues: Small ribosomal subunit protein uS13 (125 aa).

Residues 92–125 are disordered; sequence RRSLPVRGQRTQTNARTRKGKRKTVAGKKKATKK. The segment covering 107–125 has biased composition (basic residues); it reads RTRKGKRKTVAGKKKATKK.

It belongs to the universal ribosomal protein uS13 family. In terms of assembly, part of the 30S ribosomal subunit. Forms a loose heterodimer with protein S19. Forms two bridges to the 50S subunit in the 70S ribosome.

In terms of biological role, located at the top of the head of the 30S subunit, it contacts several helices of the 16S rRNA. In the 70S ribosome it contacts the 23S rRNA (bridge B1a) and protein L5 of the 50S subunit (bridge B1b), connecting the 2 subunits; these bridges are implicated in subunit movement. Contacts the tRNAs in the A and P-sites. The protein is Small ribosomal subunit protein uS13 of Chlorobium limicola (strain DSM 245 / NBRC 103803 / 6330).